We begin with the raw amino-acid sequence, 65 residues long: Small ribosomal subunit protein bS21 (65 aa).

The span at 33 to 42 (RRREHYEKPS) shows a compositional bias: basic and acidic residues. Positions 33 to 65 (RRREHYEKPSVKRKRKEAARLRKLQKMAREANN) are disordered. Residues 43–58 (VKRKRKEAARLRKLQK) are compositionally biased toward basic residues.

It belongs to the bacterial ribosomal protein bS21 family.

The sequence is that of Small ribosomal subunit protein bS21 from Herpetosiphon aurantiacus (strain ATCC 23779 / DSM 785 / 114-95).